Here is a 53-residue protein sequence, read N- to C-terminus: UPF0391 membrane protein Meso_3392 (53 aa).

2 consecutive transmembrane segments (helical) span residues 4–24 (WILI…HSLA) and 33–53 (ILIA…IAIA).

It belongs to the UPF0391 family.

Its subcellular location is the cell membrane. In Chelativorans sp. (strain BNC1), this protein is UPF0391 membrane protein Meso_3392.